Reading from the N-terminus, the 258-residue chain is Aquaglyceroporin (258 aa).

The Cytoplasmic portion of the chain corresponds to Met-1–Glu-16. Residues Phe-17–Val-37 form a helical membrane-spanning segment. Topologically, residues Pro-38–Arg-45 are extracellular. The chain crosses the membrane as a helical span at residues Leu-46–Gly-66. Glycerol is bound by residues Ala-67 and Asn-70. Residues Ala-67 to Gln-87 lie on the Cytoplasmic side of the membrane. Residues Ile-88–Gly-108 traverse the membrane as a helical segment. Residues Leu-109 to His-133 are Extracellular-facing. Residues Ile-134–Ser-154 traverse the membrane as a helical segment. Over Val-155–Ser-171 the chain is Cytoplasmic. The helical transmembrane segment at Ile-172 to Leu-192 threads the bilayer. Residues Gly-189, Phe-190, Asn-193, and Arg-196 each contribute to the glycerol site. Over Asn-193–Lys-217 the chain is Extracellular. Residues Cys-218 to Tyr-238 form a helical membrane-spanning segment. Residues Asp-239–Ile-258 are Cytoplasmic-facing.

Belongs to the MIP/aquaporin (TC 1.A.8) family.

The protein resides in the cell membrane. The catalysed reaction is H2O(in) = H2O(out). The enzyme catalyses glycerol(in) = glycerol(out). It carries out the reaction urea(in) = urea(out). Mediates water and glycerol transport across the cell membrane. Permeable to urea. Required for efficient progression of parasites through the liver stages. The polypeptide is Aquaglyceroporin (Plasmodium berghei (strain Anka)).